The chain runs to 177 residues: Large ribosomal subunit protein uL6 (177 aa).

Belongs to the universal ribosomal protein uL6 family. In terms of assembly, part of the 50S ribosomal subunit.

This protein binds to the 23S rRNA, and is important in its secondary structure. It is located near the subunit interface in the base of the L7/L12 stalk, and near the tRNA binding site of the peptidyltransferase center. The sequence is that of Large ribosomal subunit protein uL6 from Pseudomonas putida (strain W619).